The following is a 435-amino-acid chain: Gamma-glutamyl phosphate reductase (435 aa).

Belongs to the gamma-glutamyl phosphate reductase family.

Its subcellular location is the cytoplasm. The catalysed reaction is L-glutamate 5-semialdehyde + phosphate + NADP(+) = L-glutamyl 5-phosphate + NADPH + H(+). Its pathway is amino-acid biosynthesis; L-proline biosynthesis; L-glutamate 5-semialdehyde from L-glutamate: step 2/2. Its function is as follows. Catalyzes the NADPH-dependent reduction of L-glutamate 5-phosphate into L-glutamate 5-semialdehyde and phosphate. The product spontaneously undergoes cyclization to form 1-pyrroline-5-carboxylate. The protein is Gamma-glutamyl phosphate reductase of Parasynechococcus marenigrum (strain WH8102).